The chain runs to 300 residues: Ribonuclease HIII (300 aa).

The 218-residue stretch at 83-300 (IPIIGSDEVG…THKAQALLTK (218 aa)) folds into the RNase H type-2 domain. 3 residues coordinate a divalent metal cation: aspartate 89, glutamate 90, and aspartate 194.

The protein belongs to the RNase HII family. RnhC subfamily. Mn(2+) is required as a cofactor. Mg(2+) serves as cofactor.

The protein resides in the cytoplasm. The enzyme catalyses Endonucleolytic cleavage to 5'-phosphomonoester.. In terms of biological role, endonuclease that specifically degrades the RNA of RNA-DNA hybrids. The chain is Ribonuclease HIII from Streptococcus pyogenes serotype M49 (strain NZ131).